The primary structure comprises 102 residues: Flagellar hook-basal body complex protein FliE (102 aa).

The protein belongs to the FliE family.

It localises to the bacterial flagellum basal body. In Halalkalibacterium halodurans (strain ATCC BAA-125 / DSM 18197 / FERM 7344 / JCM 9153 / C-125) (Bacillus halodurans), this protein is Flagellar hook-basal body complex protein FliE.